The chain runs to 295 residues: Uridine and thymidine phosphorylase (295 aa).

Residues arginine 81 and arginine 125 to threonine 128 contribute to the phosphate site. Substrate is bound by residues glutamine 203 and arginine 205.

This sequence belongs to the PNP/UDP phosphorylase family. As to expression, expressed in hypodermis, pharynx, spermatheca and gonad.

The enzyme catalyses uridine + phosphate = alpha-D-ribose 1-phosphate + uracil. It catalyses the reaction thymidine + phosphate = 2-deoxy-alpha-D-ribose 1-phosphate + thymine. The catalysed reaction is 2'-deoxyuridine + phosphate = 2-deoxy-alpha-D-ribose 1-phosphate + uracil. Its pathway is pyrimidine metabolism; UMP biosynthesis via salvage pathway; uracil from uridine (phosphorylase route): step 1/1. It participates in pyrimidine metabolism; dTMP biosynthesis via salvage pathway; dTMP from thymine: step 1/2. Catalyzes the reversible phosphorylytic cleavage of uridine and thymidine to uracil and ribose-phosphate or thymine and deoxyribose-1-phosphate. The produced molecules are then utilized as carbon and energy sources or in the rescue of pyrimidine bases for nucleotide synthesis. Required for normal lifespan. This chain is Uridine and thymidine phosphorylase, found in Caenorhabditis elegans.